The primary structure comprises 150 residues: Catabolic 3-dehydroquinase 2 (150 aa).

Tyr23 acts as the Proton acceptor in catalysis. Residues Asn74, His80, and Asp87 each coordinate substrate. Catalysis depends on His100, which acts as the Proton donor. Residues 101-102 (IT) and Arg111 each bind substrate.

The protein belongs to the type-II 3-dehydroquinase family. As to quaternary structure, homododecamer. Adopts a ring-like structure, composed of an arrangement of two hexameric rings stacked on top of one another.

It catalyses the reaction 3-dehydroquinate = 3-dehydroshikimate + H2O. It functions in the pathway aromatic compound metabolism; 3,4-dihydroxybenzoate biosynthesis; 3,4-dihydroxybenzoate from 3-dehydroquinate: step 1/2. Its function is as follows. Is involved in the catabolism of quinate. Allows the utilization of quinate as carbon source via the beta-ketoadipate pathway. The polypeptide is Catabolic 3-dehydroquinase 2 (Neosartorya fischeri (strain ATCC 1020 / DSM 3700 / CBS 544.65 / FGSC A1164 / JCM 1740 / NRRL 181 / WB 181) (Aspergillus fischerianus)).